The primary structure comprises 78 residues: Putative membrane protein insertion efficiency factor (78 aa).

The protein belongs to the UPF0161 family.

Its subcellular location is the cell membrane. Functionally, could be involved in insertion of integral membrane proteins into the membrane. In Bacillus anthracis (strain A0248), this protein is Putative membrane protein insertion efficiency factor.